A 108-amino-acid chain; its full sequence is Long neurotoxin 43 (108 aa).

The N-terminal stretch at 1 to 21 (MKTLLLTLVVVTIVCLDLAYT) is a signal peptide. 5 disulfide bridges follow: C24/C42, C35/C63, C48/C52, C67/C78, and C79/C84.

This sequence belongs to the three-finger toxin family. Long-chain subfamily. Type II alpha-neurotoxin sub-subfamily. In terms of tissue distribution, expressed by the venom gland.

It is found in the secreted. Binds with high affinity to muscular (alpha-1/CHRNA1) and neuronal (alpha-7/CHRNA7) nicotinic acetylcholine receptor (nAChR) and inhibits acetylcholine from binding to the receptor, thereby impairing neuromuscular and neuronal transmission. In Drysdalia coronoides (White-lipped snake), this protein is Long neurotoxin 43.